Consider the following 329-residue polypeptide: L-carnitine dehydrogenase (329 aa).

An NAD(+)-binding site is contributed by 19–24; it reads GAGVIG.

This sequence belongs to the 3-hydroxyacyl-CoA dehydrogenase family. L-carnitine dehydrogenase subfamily. Homodimer.

Its subcellular location is the cytoplasm. The enzyme catalyses carnitine + NAD(+) = 3-dehydrocarnitine + NADH + H(+). It functions in the pathway amine and polyamine metabolism; carnitine metabolism. Catalyzes the NAD(+)-dependent oxidation of L-carnitine to 3-dehydrocarnitine. In Nocardiopsis dassonvillei (strain ATCC 23218 / DSM 43111 / CIP 107115 / JCM 7437 / KCTC 9190 / NBRC 14626 / NCTC 10488 / NRRL B-5397 / IMRU 509) (Actinomadura dassonvillei), this protein is L-carnitine dehydrogenase.